The chain runs to 304 residues: Olfactory receptor 52A4 (304 aa).

Over 1 to 32 (MALPITNGTLFMPFVLTFIGIPGFESVQCWIG) the chain is Extracellular. The N-linked (GlcNAc...) asparagine glycan is linked to asparagine 7. Residues 33–53 (IPFCATYVIALIGNSLLLIII) traverse the membrane as a helical segment. The Cytoplasmic portion of the chain corresponds to 54 to 61 (KSEPSLHE). A helical membrane pass occupies residues 62–82 (PMYIFLATLGATDISLSTSIV). Residues 83–103 (PKMLDIFWFHLPEIYFDACLF) are Extracellular-facing. A disulfide bond links cysteine 101 and cysteine 184. Residues 104–124 (QMWLIHTFQGIESGVLLAMAL) traverse the membrane as a helical segment. Residues 125-146 (DRCVAICYPLRRAIVFTRQLVT) lie on the Cytoplasmic side of the membrane. Residues 147–167 (YIVVGVTLRPAILVIPCLLLI) form a helical membrane-spanning segment. The Extracellular segment spans residues 168–203 (KCHLKLYRTKLIYHTYCERVALVKLATEDVYINKVY). The helical transmembrane segment at 204 to 224 (GILGAFIVGGLDFIFITLSYI) threads the bilayer. Over 225-255 (QIFITVFHLPLKEARLKVFNTCIPHIYVFFQ) the chain is Cytoplasmic. The helical transmembrane segment at 256–276 (FYLLAFFFIFYSQIWILYPII) threads the bilayer. Topologically, residues 277-279 (CTY) are extracellular. The chain crosses the membrane as a helical span at residues 280 to 300 (HLVQSLPTGPTIPQPLYLWVK). Over 301 to 304 (DQTH) the chain is Cytoplasmic.

Belongs to the G-protein coupled receptor 1 family.

It localises to the cell membrane. Odorant receptor. The polypeptide is Olfactory receptor 52A4 (Homo sapiens (Human)).